The sequence spans 333 residues: uncharacterized protein (333 aa).

Positions 94–122 (NLYREVWRELEEEQNKVEKLREYILKLDS) form a coiled coil.

This is an uncharacterized protein from Aquifex aeolicus (strain VF5).